Here is a 273-residue protein sequence, read N- to C-terminus: NH(3)-dependent NAD(+) synthetase (273 aa).

45 to 52 lines the ATP pocket; the sequence is GISGGQDS. Mg(2+) is bound at residue Asp51. Arg139 lines the deamido-NAD(+) pocket. Residue Thr159 coordinates ATP. Glu164 is a Mg(2+) binding site. Positions 172 and 179 each coordinate deamido-NAD(+). ATP contacts are provided by Lys188 and Thr210. 259–260 is a binding site for deamido-NAD(+); that stretch reads HK.

The protein belongs to the NAD synthetase family. As to quaternary structure, homodimer.

The catalysed reaction is deamido-NAD(+) + NH4(+) + ATP = AMP + diphosphate + NAD(+) + H(+). The protein operates within cofactor biosynthesis; NAD(+) biosynthesis; NAD(+) from deamido-NAD(+) (ammonia route): step 1/1. In terms of biological role, catalyzes the ATP-dependent amidation of deamido-NAD to form NAD. Uses ammonia as a nitrogen source. This is NH(3)-dependent NAD(+) synthetase from Bacillus pumilus (strain SAFR-032).